The sequence spans 186 residues: Ribosome rescue factor SmrB (186 aa).

Residues 99-174 enclose the Smr domain; it reads IDLHGLTQHQ…SDAAIIVIIE (76 aa).

This sequence belongs to the SmrB family. In terms of assembly, associates with collided ribosomes, but not with correctly translating polysomes.

Functionally, acts as a ribosome collision sensor. Detects stalled/collided disomes (pairs of ribosomes where the leading ribosome is stalled and a second ribosome has collided with it) and endonucleolytically cleaves mRNA at the 5' boundary of the stalled ribosome. Stalled/collided disomes form a new interface (primarily via the 30S subunits) that binds SmrB. Cleaved mRNA becomes available for tmRNA ligation, leading to ribosomal subunit dissociation and rescue of stalled ribosomes. The sequence is that of Ribosome rescue factor SmrB from Buchnera aphidicola subsp. Acyrthosiphon pisum (strain Tuc7).